Reading from the N-terminus, the 148-residue chain is UPF0178 protein EF_0842 (148 aa).

This sequence belongs to the UPF0178 family.

This Enterococcus faecalis (strain ATCC 700802 / V583) protein is UPF0178 protein EF_0842.